Consider the following 435-residue polypeptide: NADH-quinone oxidoreductase subunit D (435 aa).

This sequence belongs to the complex I 49 kDa subunit family. As to quaternary structure, NDH-1 is composed of 14 different subunits. Subunits NuoB, C, D, E, F, and G constitute the peripheral sector of the complex.

It localises to the cell inner membrane. The enzyme catalyses a quinone + NADH + 5 H(+)(in) = a quinol + NAD(+) + 4 H(+)(out). In terms of biological role, NDH-1 shuttles electrons from NADH, via FMN and iron-sulfur (Fe-S) centers, to quinones in the respiratory chain. The immediate electron acceptor for the enzyme in this species is believed to be ubiquinone. Couples the redox reaction to proton translocation (for every two electrons transferred, four hydrogen ions are translocated across the cytoplasmic membrane), and thus conserves the redox energy in a proton gradient. The polypeptide is NADH-quinone oxidoreductase subunit D (Xylella fastidiosa (strain 9a5c)).